A 297-amino-acid polypeptide reads, in one-letter code: tRNA pseudouridine synthase B (297 aa).

Asp44 acts as the Nucleophile in catalysis.

This sequence belongs to the pseudouridine synthase TruB family. Type 1 subfamily.

The enzyme catalyses uridine(55) in tRNA = pseudouridine(55) in tRNA. Its function is as follows. Responsible for synthesis of pseudouridine from uracil-55 in the psi GC loop of transfer RNAs. This chain is tRNA pseudouridine synthase B, found in Corynebacterium glutamicum (strain R).